Reading from the N-terminus, the 53-residue chain is Conotoxin Vc5.3 (53 aa).

The signal sequence occupies residues 1-15; the sequence is VILLLLTASAPSVDA. Residues 16–41 constitute a propeptide that is removed on maturation; that stretch reads RPKTEDVPLSSFRDNTKSTLQRLLKR.

Belongs to the conotoxin T superfamily. Contains 2 disulfide bonds that can be either 'C1-C3, C2-C4' or 'C1-C4, C2-C3', since these disulfide connectivities have been observed for conotoxins with cysteine framework V (for examples, see AC P0DQQ7 and AC P81755). Expressed by the venom duct.

The protein resides in the secreted. The chain is Conotoxin Vc5.3 from Conus victoriae (Queen Victoria cone).